Reading from the N-terminus, the 109-residue chain is Photosystem II reaction center Psb28 protein (109 aa).

Belongs to the Psb28 family. In terms of assembly, part of the photosystem II complex.

Its subcellular location is the plastid. The protein localises to the chloroplast thylakoid membrane. In Cyanidioschyzon merolae (strain NIES-3377 / 10D) (Unicellular red alga), this protein is Photosystem II reaction center Psb28 protein.